Consider the following 392-residue polypeptide: Protein RecA (392 aa).

The tract at residues 1 to 21 (MALETKPAQDPATEIKHELDP) is disordered. 83–90 (GPESSGKT) provides a ligand contact to ATP. Residues 372-392 (DAAKDTKATAAPAAKSSRAKA) are disordered. Low complexity predominate over residues 379 to 392 (ATAAPAAKSSRAKA).

The protein belongs to the RecA family.

It localises to the cytoplasm. Can catalyze the hydrolysis of ATP in the presence of single-stranded DNA, the ATP-dependent uptake of single-stranded DNA by duplex DNA, and the ATP-dependent hybridization of homologous single-stranded DNAs. It interacts with LexA causing its activation and leading to its autocatalytic cleavage. This chain is Protein RecA, found in Bifidobacterium breve.